The following is a 68-amino-acid chain: Negative regulatory protein YxlD (68 aa).

The next 2 membrane-spanning stretches (helical) occupy residues 5 to 25 (EIII…FLFI) and 37 to 57 (WGIV…FFVI).

It localises to the cell membrane. Together with YxlE, is important for negative regulation of sigma Y activity, being the major negative regulator. This Bacillus subtilis (strain 168) protein is Negative regulatory protein YxlD (yxlD).